A 262-amino-acid polypeptide reads, in one-letter code: Acyl-[acyl-carrier-protein]--UDP-N-acetylglucosamine O-acyltransferase (262 aa).

The protein belongs to the transferase hexapeptide repeat family. LpxA subfamily. Homotrimer.

It is found in the cytoplasm. The enzyme catalyses a (3R)-hydroxyacyl-[ACP] + UDP-N-acetyl-alpha-D-glucosamine = a UDP-3-O-[(3R)-3-hydroxyacyl]-N-acetyl-alpha-D-glucosamine + holo-[ACP]. Its pathway is glycolipid biosynthesis; lipid IV(A) biosynthesis; lipid IV(A) from (3R)-3-hydroxytetradecanoyl-[acyl-carrier-protein] and UDP-N-acetyl-alpha-D-glucosamine: step 1/6. Its function is as follows. Involved in the biosynthesis of lipid A, a phosphorylated glycolipid that anchors the lipopolysaccharide to the outer membrane of the cell. This Aliivibrio salmonicida (strain LFI1238) (Vibrio salmonicida (strain LFI1238)) protein is Acyl-[acyl-carrier-protein]--UDP-N-acetylglucosamine O-acyltransferase.